The following is a 449-amino-acid chain: uncharacterized protein (449 aa).

The span at 1–11 (MLDAPEQDPVD) shows a compositional bias: acidic residues. Residues 1 to 33 (MLDAPEQDPVDPGDPASPPHGEAEQPLPGPRWP) are disordered. A helical membrane pass occupies residues 45 to 65 (LLLTALGGLLIAGLVTAIPAV). The interval 349-449 (QPPVPPPDIP…PGPAEPAPAG (101 aa)) is disordered. The span at 365–387 (PPIPLQLPTPRPAPPAQQLPSTP) shows a compositional bias: pro residues. Residues 409–418 (HAPASAAPAE) are compositionally biased toward low complexity. Positions 437–449 (ATPPGPAEPAPAG) are enriched in pro residues.

The protein resides in the cell membrane. The protein localises to the secreted. Its function is as follows. May play a role in septum formation. This is an uncharacterized protein from Mycobacterium tuberculosis (strain CDC 1551 / Oshkosh).